The chain runs to 823 residues: Leucine--tRNA ligase (823 aa).

Residues 42-52 (PYPSGTLHMGH) carry the 'HIGH' region motif. The 'KMSKS' region motif lies at 575–579 (KMSKS). An ATP-binding site is contributed by K578.

This sequence belongs to the class-I aminoacyl-tRNA synthetase family.

It is found in the cytoplasm. It carries out the reaction tRNA(Leu) + L-leucine + ATP = L-leucyl-tRNA(Leu) + AMP + diphosphate. The protein is Leucine--tRNA ligase of Legionella pneumophila (strain Lens).